The sequence spans 326 residues: Acetyl-coenzyme A carboxylase carboxyl transferase subunit beta (326 aa).

The CoA carboxyltransferase N-terminal domain maps to Leu25 to Leu308. The tract at residues Arg298–Asp326 is disordered. Positions Lys317–Asp326 are enriched in basic and acidic residues.

Belongs to the AccD/PCCB family. As to quaternary structure, acetyl-CoA carboxylase is a heterohexamer composed of biotin carboxyl carrier protein (AccB), biotin carboxylase (AccC) and two subunits each of ACCase subunit alpha (AccA) and ACCase subunit beta (AccD).

It localises to the cytoplasm. The enzyme catalyses N(6)-carboxybiotinyl-L-lysyl-[protein] + acetyl-CoA = N(6)-biotinyl-L-lysyl-[protein] + malonyl-CoA. The protein operates within lipid metabolism; malonyl-CoA biosynthesis; malonyl-CoA from acetyl-CoA: step 1/1. Its function is as follows. Component of the acetyl coenzyme A carboxylase (ACC) complex. Biotin carboxylase (BC) catalyzes the carboxylation of biotin on its carrier protein (BCCP) and then the CO(2) group is transferred by the transcarboxylase to acetyl-CoA to form malonyl-CoA. The polypeptide is Acetyl-coenzyme A carboxylase carboxyl transferase subunit beta (Hyphomonas neptunium (strain ATCC 15444)).